We begin with the raw amino-acid sequence, 409 residues long: MPGPQGGTGAPTMSLGKLSPVGWVSSSHGKRRLTADMISPPLGDFRHTMHVGRGGDVFGDTSFLSNHGGRSGNTHRSPRSFLARKLQQVRRVGVPPRRMASPAAPSPAPPPISPIIKNAISLPQLNQATYDSLVMGKLSFDSTPASSTDGHSGYGLESGFCTISRLPRVEKHSNRDRDRDPDHSQDREQSSFPSEPTPNPELRRSDSLLSFRFDLDLGPSLLSELLGVMSLSEAPAAETPVPTANPPAPAANPAPTAKPPAHAITTLDAVTSLPASAVTSLPAPAAASSPSRGHFPNGVTSVLGPAAEAKPSPVGEGPQVPSNMTFDRHGASWGASRASWGASRASRHYTEMDARRELAGVLPQVHGSWESLNEDWSTPPASVRAPVPTSVQVNAFEFADAEEDDEVKV.

The interval 1 to 29 is disordered; the sequence is MPGPQGGTGAPTMSLGKLSPVGWVSSSHG. Phosphoserine is present on residues serine 19 and serine 27. Phosphothreonine is present on threonine 34. Residues 38 to 52 enclose the CRIB domain; it reads ISPPLGDFRHTMHVG. Serine 39 is subject to Phosphoserine. Arginine 53 bears the Omega-N-methylarginine mark. A phosphoserine mark is found at serine 65, serine 77, serine 101, serine 113, serine 121, and serine 139. Over residues 167 to 189 the composition is skewed to basic and acidic residues; it reads PRVEKHSNRDRDRDPDHSQDREQ. The tract at residues 167–203 is disordered; that stretch reads PRVEKHSNRDRDRDPDHSQDREQSSFPSEPTPNPELR. Phosphoserine is present on residues serine 191, serine 205, serine 207, and serine 210. 3 consecutive repeat copies span residues 235-241, 242-248, and 255-261. The segment at 235–284 is 3 X 7 AA tandem repeats of [PT]-[AT]-A-[ENT]-[PT]-[PTS]-[AG]; sequence PAAETPVPTANPPAPAANPAPTAKPPAHAITTLDAVTSLPASAVTSLPAP. Disordered regions lie at residues 237-260 and 282-329; these read AETPVPTANPPAPAANPAPTAKPP and PAPA…FDRH. Positions 243–258 are enriched in pro residues; that stretch reads TANPPAPAANPAPTAK. Over residues 282–291 the composition is skewed to low complexity; that stretch reads PAPAAASSPS. A phosphoserine mark is found at serine 312, serine 332, serine 368, and serine 371.

This sequence belongs to the BORG/CEP family. Interacts with RHOQ and CDC42, in a GTP-dependent manner.

Its subcellular location is the endomembrane system. The protein resides in the cytoplasm. It is found in the cytoskeleton. Its function is as follows. Probably involved in the organization of the actin cytoskeleton. Induced membrane extensions in fibroblasts. In Mus musculus (Mouse), this protein is Cdc42 effector protein 1 (Cdc42ep1).